Here is a 418-residue protein sequence, read N- to C-terminus: Actin-like protein C08B11.6 (418 aa).

Belongs to the actin family. ARP6 subfamily.

The protein localises to the cytoplasm. The protein resides in the cytoskeleton. This is Actin-like protein C08B11.6 (arp-6) from Caenorhabditis elegans.